We begin with the raw amino-acid sequence, 205 residues long: MGNMDGKTVEELSATEIHRWYKKFMTECPSGQLTQHEFKQFFGLKNLSPASNQYIEQMFDTFDFNKDGYMDFMEYVAALSLVLKGKVEQKLRWYFKLYDVDGNGCIDRGELLNIIKAIRAINRCNDEMTAEEFTDMVFDKIDINGDGELSLEEFIEGVQKDELLLEVLTRSLDLKHIVYMIQNDGKRMEISERPRQEITTGNSLP.

G2 carries N-myristoyl glycine lipidation. N3 is modified (deamidated asparagine). 4 EF-hand domains span residues 30-48 (SGQLTQHEFKQFFGLKNLS), 50-85 (ASNQYIEQMFDTFDFNKDGYMDFMEYVAALSLVLKG), 86-121 (KVEQKLRWYFKLYDVDGNGCIDRGELLNIIKAIRAI), and 129-164 (TAEEFTDMVFDKIDINGDGELSLEEFIEGVQKDELL). D63, N65, D67, Y69, E74, D99, D101, N103, C105, E110, D142, N144, D146, E148, and E153 together coordinate Ca(2+).

As to expression, retina.

Regulatory protein that inhibits guanylyl cyclase when free calcium ions concentration is elevated. This Ca(2+)-sensitive regulation of retinal guanylyl cyclase is a key event in recovery of the dark state of rod photoreceptors following light exposure. The protein is Guanylyl cyclase-activating protein 1 (GUCA1A) of Lithobates pipiens (Northern leopard frog).